Consider the following 188-residue polypeptide: Putative lipoprotein LprB (188 aa).

Positions 1 to 27 (MRCDVRALALAARGLIELMIVIPMVAG) are cleaved as a signal peptide. Cysteine 28 carries the N-palmitoyl cysteine lipid modification. A lipid anchor (S-diacylglycerol cysteine) is attached at cysteine 28.

The protein localises to the cell membrane. The polypeptide is Putative lipoprotein LprB (lprB) (Mycobacterium leprae (strain TN)).